Here is a 175-residue protein sequence, read N- to C-terminus: Zinc finger A20 and AN1 domain-containing stress-associated protein 7 (175 aa).

Residues 13–47 (PTEPKLCDNGCGFFGSPSNMNLCSKCYRSLRAEED) form an A20-type zinc finger. Cys19, Cys23, Cys35, Cys38, Cys116, Cys119, Cys130, Cys132, Cys137, His140, His146, and Cys148 together coordinate Zn(2+). The AN1-type zinc finger occupies 110–156 (VRPNNRCFSCNKKVGVMGFKCKCGSTFCGSHRYPEKHECSFDFKEVG).

Functionally, may be involved in environmental stress response. The polypeptide is Zinc finger A20 and AN1 domain-containing stress-associated protein 7 (SAP7) (Arabidopsis thaliana (Mouse-ear cress)).